We begin with the raw amino-acid sequence, 277 residues long: Phosphate import ATP-binding protein PstB 2 (277 aa).

Positions 31-272 (IEVPGLSLFY…PAKKQTEDYI (242 aa)) constitute an ABC transporter domain. 63-70 (GPSGCGKS) contacts ATP.

The protein belongs to the ABC transporter superfamily. Phosphate importer (TC 3.A.1.7) family. In terms of assembly, the complex is composed of two ATP-binding proteins (PstB), two transmembrane proteins (PstC and PstA) and a solute-binding protein (PstS).

The protein resides in the cell inner membrane. The enzyme catalyses phosphate(out) + ATP + H2O = ADP + 2 phosphate(in) + H(+). In terms of biological role, part of the ABC transporter complex PstSACB involved in phosphate import. Responsible for energy coupling to the transport system. The protein is Phosphate import ATP-binding protein PstB 2 of Pseudomonas putida (strain ATCC 47054 / DSM 6125 / CFBP 8728 / NCIMB 11950 / KT2440).